The chain runs to 270 residues: UPF0354 protein BCG9842_B0431 (270 aa).

This sequence belongs to the UPF0354 family.

The chain is UPF0354 protein BCG9842_B0431 from Bacillus cereus (strain G9842).